The sequence spans 94 residues: Large ribosomal subunit protein eL42 (94 aa).

The Zn(2+) site is built by cysteine 11, cysteine 14, cysteine 71, and cysteine 74. The segment at 11-74 (CPYCKRHTIH…LDLRFVCTVC (64 aa)) adopts a C4-type zinc-finger fold.

It belongs to the eukaryotic ribosomal protein eL42 family. In terms of assembly, part of the 50S ribosomal subunit. Zn(2+) is required as a cofactor.

Its function is as follows. Binds to the 23S rRNA. This Pyrococcus horikoshii (strain ATCC 700860 / DSM 12428 / JCM 9974 / NBRC 100139 / OT-3) protein is Large ribosomal subunit protein eL42.